A 411-amino-acid chain; its full sequence is MTQIKLLLLSLAITAQSITYDLPSQWDHQWLTQQPLGSDTTCTTSHLTAFQMSKTKDPIFFSTGGTDPFLSPKMLPLNSTAGEQWEFDGVSPDAKMAFVFGFYRDPNYAILGSGNLRVSVEMLWPNGTRFAQVDYPTDSVIEECEWGTRGVWRADEFSYSFEVSRDLQTARVAMHTPQVTGVVYLDSESKPRYPDGKIYPSETSTSEALPYFHFVEPIPVAKSQVDLMILGESYVWSDGVGGMERLWGAFSWFTCLQGMNVVRLHAGPYALSLLSFTSNIKKGNEYPSIALFENGEPVFSSQRTEDSDTADYFTFTKTYDGKVTGTLRDKVTGYELELVSPGEKKHWTFIIDHESLAFEYILGGGHGGSGFAGFVQGGRVGLEQFRGIALTEALTFPKKSPLFRSQYSETS.

Residues 1–17 (MTQIKLLLLSLAITAQS) form the signal peptide.

Belongs to the Diels-Alderase family.

The protein operates within mycotoxin biosynthesis. Its function is as follows. Diels-Alderase; part of the gene cluster that mediates the biosynthesis of the cytotoxic leucine-containing cytochalasans, including aspochalasin C, aspochalasin E, TMC-169, flavichalasine F, aspergillin PZ, aspochalasin M and flavichalasine G. The first step in the pathway is catalyzed by the hybrid PKS-NRPS ffsA that utilizes 8 units of malonyl-CoA to iteratively assemble the octaketide chain before addition of L-leucine by the C-terminal NRPS modules. Because ffsA lacks a designated enoylreductase (ER) domain, the required activity is provided the enoyl reductase fssC. The methyltransferase (MT) domain of ffsA catalyzes the alpha-methylation at C10 and C14 using S-adenosyl-L-methionine as the methyl-donating cosubstrate. Reduction by the hydrolyase ffsE, followed by dehydration and intra-molecular Diels-Alder cyclization by the Diels-Alderase ffsF then yield the required isoindolone-fused macrocycle. A number of oxidative steps catalyzed by the tailoring cytochrome P450 monooxygenase ffsD, the FAD-linked oxidoreductase ffsJ and the short-chain dehydrogenase/reductase ffsI, are further required to afford the final products. The chain is Diels-Alderase ffsF from Aspergillus flavipes.